The primary structure comprises 313 residues: Beta-ribofuranosylphenol 5'-phosphate synthase (313 aa).

This sequence belongs to the beta-RFA-P synthase family. In terms of assembly, homodimer.

The enzyme catalyses 5-phospho-alpha-D-ribose 1-diphosphate + 4-hydroxybenzoate + H(+) = 4-(beta-D-ribofuranosyl)phenol 5'-phosphate + CO2 + diphosphate. It catalyses the reaction 4-aminobenzoate + 5-phospho-alpha-D-ribose 1-diphosphate + H(+) = 4-(beta-D-ribofuranosyl)aminobenzene 5'-phosphate + CO2 + diphosphate. Its pathway is cofactor biosynthesis; 5,6,7,8-tetrahydromethanopterin biosynthesis. Functionally, catalyzes the condensation of 4-hydroxybenzoate (HB) with 5-phospho-alpha-D-ribose 1-diphosphate (PRPP) to produce beta-ribofuranosylphenol 5'-phosphate (beta-RFH-P). Also catalyzes the condensation of 4-aminobenzoate (pABA) with PRPP to produce beta-ribofuranosylaminobenzene 5'-phosphate (beta-RFA-P). This is Beta-ribofuranosylphenol 5'-phosphate synthase from Archaeoglobus fulgidus (strain ATCC 49558 / DSM 4304 / JCM 9628 / NBRC 100126 / VC-16).